Reading from the N-terminus, the 346-residue chain is Threonylcarbamoyl-AMP synthase (346 aa).

The YrdC-like domain maps to 18–205 (DPQIAQAAAL…IPVLLRPGGI (188 aa)). Threonine 40 is an L-threonine binding site. 2 residues coordinate ATP: arginine 63 and asparagine 67. L-threonine is bound at residue histidine 72. Threonine 123 is a binding site for ATP. Residues arginine 127 and alanine 147 each coordinate L-threonine. ATP contacts are provided by serine 149 and serine 157. Position 187 (serine 187) interacts with L-threonine. Arginine 201 and tyrosine 240 together coordinate ATP.

Belongs to the SUA5 family.

It is found in the cytoplasm. It catalyses the reaction L-threonine + hydrogencarbonate + ATP = L-threonylcarbamoyladenylate + diphosphate + H2O. Its function is as follows. Required for the formation of a threonylcarbamoyl group on adenosine at position 37 (t(6)A37) in tRNAs that read codons beginning with adenine. Catalyzes the conversion of L-threonine, HCO(3)(-)/CO(2) and ATP to give threonylcarbamoyl-AMP (TC-AMP) as the acyladenylate intermediate, with the release of diphosphate. Is also able to catalyze the reverse reaction in vitro, i.e. the formation of ATP from TC-AMP and PPi. The chain is Threonylcarbamoyl-AMP synthase (ywlC) from Bacillus subtilis (strain 168).